A 101-amino-acid polypeptide reads, in one-letter code: RNA-3 uncharacterized 11.6 kDa protein (101 aa).

This is RNA-3 uncharacterized 11.6 kDa protein from Beet necrotic yellow vein mosaic virus (isolate Yugoslavia/G1) (BNYVV).